A 79-amino-acid polypeptide reads, in one-letter code: uncharacterized protein (79 aa).

Positions 1–33 are cleaved as a signal peptide; that stretch reads MRFIIRTVMLIALVWIGLLLSGYGVLIGSKENA.

This is an uncharacterized protein from Escherichia coli O157:H7.